The chain runs to 337 residues: Leucine-rich repeat-containing protein 39 (337 aa).

LRR repeat units lie at residues 84–105 (QLQE…IGRF), 107–128 (HLIV…IGLL), 130–152 (RLQE…SNCT), 153–176 (SLEK…SKLL), 177–198 (KLTH…VLDM), 200–221 (ALEW…LDRM), 223–244 (SLHT…IKNM), 246–267 (NLGT…MEEM), and 269–290 (NLRF…PPSD).

Interacts with MYH7 (via C-terminus). In terms of tissue distribution, expressed in heart and skeletal muscle.

Its subcellular location is the cytoplasm. The protein localises to the myofibril. It is found in the sarcomere. The protein resides in the m line. Its function is as follows. Component of the sarcomeric M-band which plays a role in myocyte response to biomechanical stress. May regulate expression of other M-band proteins via an SRF-dependent pathway. Important for normal contractile function in heart. This Mus musculus (Mouse) protein is Leucine-rich repeat-containing protein 39.